The sequence spans 399 residues: MQRKECVAMLLAGGQGSRLGVLTKKLAKPAVPFGGRYRIIDFTLSNCNNSGFDTVGVLTQYQPLALNTYIGIGSHWDLDRKNGGVTVLPPFVKEMGGEWYKGTANAIYQNIEFVDQYKPKYILILSGDHIYKMDYSLMLDFHKEKQADATIAVIEVPWQEASGFGIMNTAKDARIVEFEEKPKVPRSNLASMGVYIFNWELLKAYLEEDERNPRSSNDFGKNIIPLMLEAGQRMFAYPFKGYWRDVGTIESLWQANMDLLLENPKLDLNDQKWRIYSVTPHQPPQYVAPSARVNCSLINEGCMVFGNVYHSILFPGVDIGKGSTIRESVILSNVKIGKNVIVERAIVGVETIIEDNCHIGCKENSCPEDCSRITVVEGNIIVPTGSFIKKDCQLVGKAG.

Alpha-D-glucose 1-phosphate-binding positions include Y100, G165, 180-181 (EK), and S191.

The protein belongs to the bacterial/plant glucose-1-phosphate adenylyltransferase family. As to quaternary structure, homotetramer.

The enzyme catalyses alpha-D-glucose 1-phosphate + ATP + H(+) = ADP-alpha-D-glucose + diphosphate. It participates in glycan biosynthesis; glycogen biosynthesis. Its function is as follows. Involved in the biosynthesis of ADP-glucose, a building block required for the elongation reactions to produce glycogen. Catalyzes the reaction between ATP and alpha-D-glucose 1-phosphate (G1P) to produce pyrophosphate and ADP-Glc. This chain is Glucose-1-phosphate adenylyltransferase, found in Desulforamulus reducens (strain ATCC BAA-1160 / DSM 100696 / MI-1) (Desulfotomaculum reducens).